The following is a 533-amino-acid chain: MALRNVPFRSEVLGWDPDSLADYFKKLNYKDCEKAVKKYHIDGARFLNLTENDIQKFPKLRVPILSKLSQEINKNEERRSIFTRKPQVPRFPEETESHEEDNGGWSSFEEDDYESPNDDQDGEDDGDYESPNEEEEAPVEDDADYEPPPSNDEEALQNSILPAKPFPNSNSMYIDRPPSGKTPQQPPVPPQRPMAALPPPPAGRNHSPLPPPQTNHEEPSRSRNHKTAKLPAPSIDRSTKPPLDRSLAPFDREPFTLGKKPPFSDKPSIPAGRSLGEHLPKIQKPPLPPTTERHERSSPLPGKKPPVPKHGWGPDRRENDEDDVHQRPLPQPALLPMSSNTFPSRSTKPSPMNPLPSSHMPGAFSESNSSFPQSASLPPYFSQGPSNRPPIRAEGRNFPLPLPNKPRPPSPAEEENSLNEEWYVSYITRPEAEAALRKINQDGTFLVRDSSKKTTTNPYVLMVLYKDKVYNIQIRYQKESQVYLLGTGLRGKEDFLSVSDIIDYFRKMPLLLIDGKNRGSRYQCTLTHAAGYP.

The 67-residue stretch at 15 to 81 (WDPDSLADYF…INKNEERRSI (67 aa)) folds into the SAM domain. Tyr-23 carries the phosphotyrosine modification. Residues 78–417 (RRSIFTRKPQ…PPSPAEEENS (340 aa)) form a disordered region. Acidic residues predominate over residues 108 to 155 (FEEDDYESPNDDQDGEDDGDYESPNEEEEAPVEDDADYEPPPSNDEEA). Positions 184–213 (QQPPVPPQRPMAALPPPPAGRNHSPLPPPQ) are enriched in pro residues. A Phosphoserine modification is found at Ser-207. Composition is skewed to polar residues over residues 337–350 (MSSN…TKPS) and 365–376 (SESNSSFPQSAS). 2 positions are modified to phosphoserine: Ser-376 and Ser-410. A compositionally biased stretch (pro residues) spans 400 to 411 (LPLPNKPRPPSP). An SH2 domain is found at 422–530 (WYVSYITRPE…RYQCTLTHAA (109 aa)).

As to quaternary structure, interacts with SLA. Interacts with CBLB. Interacts with GRB2. Interacts with SHB. Interacts with PRAM1. Interacts (via SH2 domain) with CD6 (via tyrosine phosphorylated C-terminus). Interacts with FYB1 and the phosphorylated form of FYB2. Interacts with 14-3-3 adapter/YWHAZ; this phosphorylation leads to YWHAZ proteolytic degradation. Interacts with VAV1; this interaction plays a role in TCR-mediated cytokine production. Interacts with AGER; this interaction plays an important role in AGER-mediated pro-inflammatory responses and cytokine release. Phosphorylated after T-cell receptor activation by ZAP70, ITK and TXK, which leads to the up-regulation of Th1 preferred cytokine IL-2. SYK-dependent phosphorylation is required for recruitment of PI3K signaling components. As to expression, highly expressed in spleen, thymus and peripheral blood leukocytes. Highly expressed also in T-cell and monocytic cell lines, expressed at lower level in B-cell lines. Not detected in fibroblast or neuroblastoma cell lines.

The protein resides in the cytoplasm. Adapter protein primarily involved in signaling pathways within T-cells, as well as other immune cells such as platelets, mast cells, and natural killer (NK) cells. Plays a crucial role for transducing signal from the T-cell receptor (TCR) after antigen recognition leading to T-cell activation. Mechanistically, once phosphorylated by the kinase ZAP70, mediates interactions with the guanine-nucleotide exchange factor VAV1, the adapter protein NCK and the kinase ITK. In turn, stimulates the activation of PKC-theta/PRKCQ and NF-kappa-B transcriptional activity in response to CD3 and CD28 costimulation. Also plays an essential role in AGER-induced signaling pathways including p38 MAPK and ERK1/2 activation leading to cytokine release and pro-inflammatory responses. This chain is Lymphocyte cytosolic protein 2 (LCP2), found in Homo sapiens (Human).